Here is a 786-residue protein sequence, read N- to C-terminus: Myosin light chain kinase 3 (786 aa).

The residue at position 155 (Ser155) is a Phosphoserine. Disordered regions lie at residues 233-258 (EALD…SEDT), 279-315 (RMSQ…IHSD), and 333-443 (ELFE…GRRV). The span at 279–293 (RMSQSAGEGTSSSKP) shows a compositional bias: polar residues. Phosphoserine is present on residues Ser341 and Ser422. Residues 482–737 (VSQHEVLGGG…ATQCLKHEWL (256 aa)) enclose the Protein kinase domain. Residues 488-496 (LGGGRFGQV) and Lys511 contribute to the ATP site. The active-site Proton acceptor is the Asp603.

This sequence belongs to the protein kinase superfamily. CAMK Ser/Thr protein kinase family. Mg(2+) is required as a cofactor. Post-translationally, phosphorylated on serine residues. Expressed in cardiomyocytes (at protein level). Up-regulated in heart after experimental myocardial infarction at the mRNA level.

The protein resides in the cytoplasm. It carries out the reaction L-seryl-[myosin light chain] + ATP = O-phospho-L-seryl-[myosin light chain] + ADP + H(+). It catalyses the reaction L-threonyl-[myosin light chain] + ATP = O-phospho-L-threonyl-[myosin light chain] + ADP + H(+). In terms of biological role, calmodulin-dependent kinase that phosphorylates MYL2 in vitro. Promotes sarcomere formation in cardiomyocytes. Increases cardiomyocyte contractility. This chain is Myosin light chain kinase 3 (Mylk3), found in Rattus norvegicus (Rat).